Here is a 164-residue protein sequence, read N- to C-terminus: Transcription elongation factor GreA (164 aa).

Belongs to the GreA/GreB family.

Its function is as follows. Necessary for efficient RNA polymerase transcription elongation past template-encoded arresting sites. The arresting sites in DNA have the property of trapping a certain fraction of elongating RNA polymerases that pass through, resulting in locked ternary complexes. Cleavage of the nascent transcript by cleavage factors such as GreA or GreB allows the resumption of elongation from the new 3'terminus. GreA releases sequences of 2 to 3 nucleotides. This chain is Transcription elongation factor GreA, found in Helicobacter pylori (strain J99 / ATCC 700824) (Campylobacter pylori J99).